We begin with the raw amino-acid sequence, 309 residues long: Tagatose-6-phosphate kinase (309 aa).

The protein belongs to the carbohydrate kinase PfkB family. LacC subfamily.

The catalysed reaction is D-tagatofuranose 6-phosphate + ATP = D-tagatofuranose 1,6-bisphosphate + ADP + H(+). The protein operates within carbohydrate metabolism; D-tagatose 6-phosphate degradation; D-glyceraldehyde 3-phosphate and glycerone phosphate from D-tagatose 6-phosphate: step 1/2. In Streptococcus pneumoniae (strain Hungary19A-6), this protein is Tagatose-6-phosphate kinase.